We begin with the raw amino-acid sequence, 419 residues long: Tyrosine--tRNA ligase (419 aa).

Residue Tyr34 coordinates L-tyrosine. The short motif at 39–48 (PTADSLHLGH) is the 'HIGH' region element. Positions 169 and 173 each coordinate L-tyrosine. Positions 229–233 (KFGKS) match the 'KMSKS' region motif. Lys232 lines the ATP pocket. The 68-residue stretch at 352–419 (LNIIDLLVTS…KKKYFVLNFK (68 aa)) folds into the S4 RNA-binding domain.

Belongs to the class-I aminoacyl-tRNA synthetase family. TyrS type 1 subfamily. Homodimer.

It is found in the cytoplasm. The catalysed reaction is tRNA(Tyr) + L-tyrosine + ATP = L-tyrosyl-tRNA(Tyr) + AMP + diphosphate + H(+). In terms of biological role, catalyzes the attachment of tyrosine to tRNA(Tyr) in a two-step reaction: tyrosine is first activated by ATP to form Tyr-AMP and then transferred to the acceptor end of tRNA(Tyr). The chain is Tyrosine--tRNA ligase from Streptococcus agalactiae serotype V (strain ATCC BAA-611 / 2603 V/R).